The following is a 232-amino-acid chain: Syntaxin-51 (232 aa).

The Cytoplasmic portion of the chain corresponds to 1-208; sequence MASSSDSWMR…NKNMRSGCSC (208 aa). The t-SNARE coiled-coil homology domain maps to 136 to 198; that stretch reads RQVMREQDEG…RRVQKSLAVM (63 aa). The helical; Anchor for type IV membrane protein transmembrane segment at 209 to 229 threads the bilayer; that stretch reads MSMLLSVLGIVGLAVVIWMLV. The Vesicular portion of the chain corresponds to 230 to 232; the sequence is KYM.

The protein belongs to the syntaxin family. In terms of assembly, interacts with VTI11 and either SYP21, or SYP22, or SYP61 in the prevacuolar compartment, or with VTI12 and SYP61 in the trans-Golgi network to form t-SNARE complexes. As to expression, expressed in root, leaf, stem, flower and silique.

It localises to the golgi apparatus. It is found in the trans-Golgi network membrane. Its subcellular location is the prevacuolar compartment membrane. Functionally, vesicle trafficking protein that functions in the secretory pathway. The protein is Syntaxin-51 (SYP51) of Arabidopsis thaliana (Mouse-ear cress).